The chain runs to 137 residues: Large ribosomal subunit protein uL16 (137 aa).

It belongs to the universal ribosomal protein uL16 family. Part of the 50S ribosomal subunit.

Binds 23S rRNA and is also seen to make contacts with the A and possibly P site tRNAs. This chain is Large ribosomal subunit protein uL16, found in Wolbachia pipientis wMel.